A 390-amino-acid polypeptide reads, in one-letter code: tRNA-specific 2-thiouridylase MnmA (390 aa).

Residues 29–36 and Leu-55 each bind ATP; that span reads GLSGGVDS. Cys-116 (nucleophile) is an active-site residue. Cys-116 and Cys-225 are joined by a disulfide. An ATP-binding site is contributed by Gly-141. Positions 175-177 are interaction with tRNA; that stretch reads KDQ. Cys-225 (cysteine persulfide intermediate) is an active-site residue. Residues 330-331 form an interaction with tRNA region; the sequence is RY.

It belongs to the MnmA/TRMU family.

It is found in the cytoplasm. The catalysed reaction is S-sulfanyl-L-cysteinyl-[protein] + uridine(34) in tRNA + AH2 + ATP = 2-thiouridine(34) in tRNA + L-cysteinyl-[protein] + A + AMP + diphosphate + H(+). Its function is as follows. Catalyzes the 2-thiolation of uridine at the wobble position (U34) of tRNA, leading to the formation of s(2)U34. The sequence is that of tRNA-specific 2-thiouridylase MnmA from Prochlorococcus marinus (strain MIT 9515).